Here is a 545-residue protein sequence, read N- to C-terminus: DNA-binding protein REPIN1 (545 aa).

The tract at residues 1-50 (MLEQRCRGPTAMGPAQPWLFSGPSQESSQPDRGLRYQGKSAQPRGQTPGK) is disordered. A Phosphoserine modification is found at S27. K39 is subject to N6-acetyllysine. A C2H2-type 1; atypical zinc finger spans residues 52–74 (HRCAHCRKRFPGWVALWLHARRC). 2 C2H2-type zinc fingers span residues 80–102 (LPCH…LQVH) and 111–133 (FICH…LRAH). The segment at 140-162 (ITCPECDRRFWRQKQLRAHLRRC) adopts a C2H2-type 4; atypical zinc-finger fold. 11 C2H2-type zinc fingers span residues 172-194 (FICG…KRVH), 229-251 (FQCA…RRVH), 257-279 (HQCP…RRIH), 285-307 (YPCT…SKIH), 353-375 (HSCS…QRQH), 381-403 (FACT…SRVH), 409-431 (FACE…RRDH), 437-459 (FVCP…RRIH), 465-487 (YVCP…RRIH), 493-515 (YACP…RKSH), and 521-543 (FCCA…QKKH). K269 is subject to N6-acetyllysine.

Homodimers and homomultimers. Found in a complex with RIP60 and RIP100.

It is found in the nucleus. The protein localises to the cytoplasm. It localises to the cytosol. Its function is as follows. Sequence-specific double-stranded DNA-binding protein. Binds ATT-rich and T-rich DNA sequences and facilitates DNA bending. May regulate the expression of genes involved in cellular fatty acid import, including SCARB1/CD36, and genes involved in lipid droplet formation. May regulate the expression of LCN2, and thereby influence iron metabolism and apoptosis-related pathways. May regulate the expression of genes involved in glucose transport. The sequence is that of DNA-binding protein REPIN1 (Repin1) from Mus musculus (Mouse).